A 652-amino-acid polypeptide reads, in one-letter code: UvrABC system protein C (652 aa).

Residues 20 to 99 form the GIY-YIG domain; sequence PEPGCYLMRD…IKNHQPHFNV (80 aa). Residues 209 to 244 form the UVR domain; the sequence is DELQRLLDEQMNRYAERLDFESAARVRDQLQGLDQL.

It belongs to the UvrC family. In terms of assembly, interacts with UvrB in an incision complex.

The protein localises to the cytoplasm. Functionally, the UvrABC repair system catalyzes the recognition and processing of DNA lesions. UvrC both incises the 5' and 3' sides of the lesion. The N-terminal half is responsible for the 3' incision and the C-terminal half is responsible for the 5' incision. The polypeptide is UvrABC system protein C (Parasynechococcus marenigrum (strain WH8102)).